We begin with the raw amino-acid sequence, 304 residues long: Ribosomal RNA small subunit methyltransferase H (304 aa).

Residues 36–38 (CGH), Asp55, Phe81, Asp102, and Gln109 contribute to the S-adenosyl-L-methionine site.

Belongs to the methyltransferase superfamily. RsmH family.

It localises to the cytoplasm. The enzyme catalyses cytidine(1402) in 16S rRNA + S-adenosyl-L-methionine = N(4)-methylcytidine(1402) in 16S rRNA + S-adenosyl-L-homocysteine + H(+). In terms of biological role, specifically methylates the N4 position of cytidine in position 1402 (C1402) of 16S rRNA. The chain is Ribosomal RNA small subunit methyltransferase H from Onion yellows phytoplasma (strain OY-M).